The sequence spans 728 residues: Double-strand break repair protein mre-11 (728 aa).

A compositionally biased stretch (acidic residues) spans 1 to 12 (MCGSDDSFDDFV). A disordered region spans residues 1 to 45 (MCGSDDSFDDFVPDSQEPASSRTRNQDHLDDDEVPCSQRPDAAND). Residues Asp73, His75, Asp113, and Asn181 each contribute to the Mn(2+) site. Catalysis depends on His182, which acts as the Proton donor. Mn(2+) is bound by residues His269, His301, and His303. The interval 601–728 (KNPVADVEME…PSKKRDLSFF (128 aa)) is disordered. Positions 607–616 (VEMEEDEDDP) are enriched in acidic residues. A compositionally biased stretch (polar residues) spans 622 to 632 (PQSTSRTNYAS). Acidic residues predominate over residues 634-645 (SEDEVANSDEEM).

The protein belongs to the MRE11/RAD32 family. As to quaternary structure, component of the MRN complex composed of two heterodimers rad-50 and mre-11 associated with a single nbs-1. Mn(2+) is required as a cofactor.

Its subcellular location is the nucleus. The protein localises to the chromosome. Core component of the MRN complex, which plays a central role in double-strand break (DSB) repair, DNA recombination, maintenance of telomere integrity and meiosis. The MRN complex is involved in the repair of DNA double-strand breaks (DSBs) via homologous recombination (HR), an error-free mechanism which primarily occurs during S and G2 phases. The complex (1) mediates the end resection of damaged DNA, which generates proper single-stranded DNA, a key initial steps in HR, and is (2) required for the recruitment of other repair factors and efficient activation of ATM and ATR upon DNA damage. Within the MRN complex, mre-11 possesses both single-strand endonuclease activity and double-strand-specific 3'-5' exonuclease activity. Mre-11 first endonucleolytically cleaves the 5' strand at DNA DSB ends to prevent non-homologous end joining (NHEJ) and licence HR. It then generates a single-stranded DNA gap via 3' to 5' exonucleolytic degradation, which is required for single-strand invasion and recombination. Required for meiotic crossing over and chiasma formation. Pachytene morphology and homolog pairing are normal. Vital in long term for maintenance of reproductive capacity of subsequent generations. This Caenorhabditis elegans protein is Double-strand break repair protein mre-11.